The sequence spans 359 residues: tRNA N6-adenosine threonylcarbamoyltransferase (359 aa).

His-115 and His-119 together coordinate Fe cation. Substrate-binding positions include 137–141 (LVSGG), Asp-170, Gly-183, and Asn-283. Residue Asp-311 participates in Fe cation binding. The tract at residues 328-359 (APDSLDIAPRSRWPLDEKSAPVFGTGRRGAKA) is disordered.

The protein belongs to the KAE1 / TsaD family. It depends on Fe(2+) as a cofactor.

The protein localises to the cytoplasm. The catalysed reaction is L-threonylcarbamoyladenylate + adenosine(37) in tRNA = N(6)-L-threonylcarbamoyladenosine(37) in tRNA + AMP + H(+). Its function is as follows. Required for the formation of a threonylcarbamoyl group on adenosine at position 37 (t(6)A37) in tRNAs that read codons beginning with adenine. Is involved in the transfer of the threonylcarbamoyl moiety of threonylcarbamoyl-AMP (TC-AMP) to the N6 group of A37, together with TsaE and TsaB. TsaD likely plays a direct catalytic role in this reaction. The polypeptide is tRNA N6-adenosine threonylcarbamoyltransferase (Brucella canis (strain ATCC 23365 / NCTC 10854 / RM-666)).